A 569-amino-acid chain; its full sequence is Adenine deaminase (569 aa).

It belongs to the metallo-dependent hydrolases superfamily. Adenine deaminase family. The cofactor is Mn(2+).

The catalysed reaction is adenine + H2O + H(+) = hypoxanthine + NH4(+). This chain is Adenine deaminase, found in Desulfitobacterium hafniense (strain Y51).